We begin with the raw amino-acid sequence, 834 residues long: Mannosyl-oligosaccharide glucosidase (834 aa).

Residues 1–10 (MARGERRRRA) show a composition bias toward basic residues. Residues 1 to 36 (MARGERRRRAAAAEGARPLERARGAGRRDGRAGGAR) lie on the Cytoplasmic side of the membrane. The disordered stretch occupies residues 1–37 (MARGERRRRAAAAEGARPLERARGAGRRDGRAGGARG). The short motif at 3–9 (RGERRRR) is the Endoplasmic reticulum targeting element. The span at 17-31 (RPLERARGAGRRDGR) shows a compositional bias: basic and acidic residues. The helical; Signal-anchor for type II membrane protein transmembrane segment at 37–57 (GSAGGAALAVVVLALAFGLSG) threads the bilayer. Topologically, residues 58-834 (RWVLAWLGVR…LVLLIMAEEY (777 aa)) are lumenal. A required for endoplasmic reticulum targeting region spans residues 74–136 (PAPSALPPDS…GTPPKLRHTC (63 aa)). D580 serves as the catalytic Proton donor. A glycan (N-linked (GlcNAc...) asparagine) is linked at N654. E804 functions as the Proton acceptor in the catalytic mechanism.

Belongs to the glycosyl hydrolase 63 family.

The protein localises to the endoplasmic reticulum membrane. The catalysed reaction is N(4)-(alpha-D-Glc-(1-&gt;2)-alpha-D-Glc-(1-&gt;3)-alpha-D-Glc-(1-&gt;3)-alpha-D-Man-(1-&gt;2)-alpha-D-Man-(1-&gt;2)-alpha-D-Man-(1-&gt;3)-[alpha-D-Man-(1-&gt;2)-alpha-D-Man-(1-&gt;3)-[alpha-D-Man-(1-&gt;2)-alpha-D-Man-(1-&gt;6)]-alpha-D-Man-(1-&gt;6)]-beta-D-Man-(1-&gt;4)-beta-D-GlcNAc-(1-&gt;4)-beta-D-GlcNAc)-L-asparaginyl-[protein] + H2O = N(4)-(alpha-D-Glc-(1-&gt;3)-alpha-D-Glc-(1-&gt;3)-alpha-D-Man-(1-&gt;2)-alpha-D-Man-(1-&gt;2)-alpha-D-Man-(1-&gt;3)-[alpha-D-Man-(1-&gt;2)-alpha-D-Man-(1-&gt;3)-[alpha-D-Man-(1-&gt;2)-alpha-D-Man-(1-&gt;6)]-alpha-D-Man-(1-&gt;6)]-beta-D-Man-(1-&gt;4)-beta-D-GlcNAc-(1-&gt;4)-beta-D-GlcNAc)-L-asparaginyl-[protein] + beta-D-glucose. It participates in glycan metabolism; N-glycan degradation. Functionally, in the context of N-glycan degradation, cleaves the distal alpha 1,2-linked glucose residue from the Glc(3)Man(9)GlcNAc(2) oligosaccharide precursor in a highly specific manner. This chain is Mannosyl-oligosaccharide glucosidase, found in Rattus norvegicus (Rat).